A 1179-amino-acid chain; its full sequence is Integrin alpha-1 (1179 aa).

The signal sequence occupies residues 1–28 (MAPRPRARPGVAVACCWLLTVVLRCCVS). The Extracellular segment spans residues 29–1141 (FNVDVKNSMT…SKDGLPGRVP (1113 aa)). Residues 30-91 (NVDVKNSMTF…CPVGRGESLP (62 aa)) form an FG-GAP 1 repeat. N-linked (GlcNAc...) asparagine glycosylation is present at asparagine 74. Cysteine 82 and cysteine 92 are disulfide-bonded. N-linked (GlcNAc...) asparagine glycans are attached at residues asparagine 100, asparagine 105, asparagine 112, asparagine 217, asparagine 317, asparagine 341, asparagine 402, asparagine 418, and asparagine 460. The FG-GAP 2 repeat unit spans residues 101–160 (TSIPNVTEVKENMTFGSTLVTNPNGGFLACGPLYAYRCGHLHYTTGICSDVSPTFQVVNS). The VWFA domain occupies 161-360 (IAPVQECSTQ…IVKTLGERIF (200 aa)). The FG-GAP 3 repeat unit spans residues 365-417 (TADQSAASFEMEMSQTGFSAHYSQDWVMLGAVGAYDWNGTVVMQKASQIIIPR). FG-GAP repeat units lie at residues 422-475 (NVES…DGNI), 476-538 (KILQ…RFEY), 557-615 (SCTT…TIRK), and 619-679 (QRIP…FEPN). Residues aspartate 498, aspartate 500, aspartate 502, and aspartate 506 each coordinate Ca(2+). N-linked (GlcNAc...) asparagine glycosylation is present at asparagine 532. Ca(2+)-binding residues include aspartate 580, asparagine 582, aspartate 584, aspartate 588, aspartate 642, asparagine 644, aspartate 646, and aspartate 650. A disulfide bond links cysteine 688 and cysteine 697. N-linked (GlcNAc...) asparagine glycosylation is found at asparagine 699, asparagine 748, and asparagine 780. The cysteines at positions 703 and 756 are disulfide-linked. Cysteine 808 and cysteine 814 form a disulfide bridge. N-linked (GlcNAc...) asparagine glycosylation is found at asparagine 840, asparagine 883, asparagine 908, asparagine 915, asparagine 939, asparagine 966, asparagine 974, and asparagine 1008. Cysteine 878 and cysteine 886 form a disulfide bridge. 2 cysteine pairs are disulfide-bonded: cysteine 1030/cysteine 1062 and cysteine 1065/cysteine 1072. Asparagine 1073, asparagine 1083, asparagine 1102, and asparagine 1113 each carry an N-linked (GlcNAc...) asparagine glycan. A helical membrane pass occupies residues 1142–1164 (LWVILLSAFAGLLLLMLLILALW). Residues 1165 to 1179 (KIGFFKRPLKKKMEK) are Cytoplasmic-facing. Positions 1167–1171 (GFFKR) match the GFFKR motif motif.

The protein belongs to the integrin alpha chain family. Heterodimer of an alpha and a beta subunit. Alpha-1 associates with beta-1. Interacts with RAB21. Interacts (via cytoplasmic domain) with PTPN2; activates PTPN2 phosphatase activity towards EGFR and negatively regulates EGF signaling.

It localises to the membrane. In terms of biological role, integrin alpha-1/beta-1 is a receptor for laminin and collagen. It recognizes the proline-hydroxylated sequence G-F-P-G-E-R in collagen. Involved in anchorage-dependent, negative regulation of EGF-stimulated cell growth. The sequence is that of Integrin alpha-1 (ITGA1) from Homo sapiens (Human).